We begin with the raw amino-acid sequence, 228 residues long: UPF0173 metal-dependent hydrolase Lm4b_01588 (228 aa).

The protein belongs to the UPF0173 family.

The polypeptide is UPF0173 metal-dependent hydrolase Lm4b_01588 (Listeria monocytogenes serotype 4b (strain CLIP80459)).